The chain runs to 182 residues: Protein canopy homolog 2 (182 aa).

Residues 1 to 20 (MKGWGWLALLLGALLGTAWA) form the signal peptide. One can recognise a Saposin B-type domain in the interval 24–175 (QDLHCGACRA…KRTDLCDHAL (152 aa)). 3 disulfides stabilise this stretch: C28/C171, C31/C164, and C86/C137. Phosphoserine is present on S115. A Prevents secretion from ER motif is present at residues 179 to 182 (HDEL).

This sequence belongs to the canopy family. Interacts with MYLIP/MIR. In terms of tissue distribution, expressed in different tissues. Highest levels are detected in adult placenta, liver and pancreas.

The protein resides in the endoplasmic reticulum. Positive regulator of neurite outgrowth by stabilizing myosin regulatory light chain (MRLC). It prevents MIR-mediated MRLC ubiquitination and its subsequent proteasomal degradation. The polypeptide is Protein canopy homolog 2 (CNPY2) (Homo sapiens (Human)).